The following is a 297-amino-acid chain: Protease HtpX homolog (297 aa).

2 consecutive transmembrane segments (helical) span residues 5 to 25 and 44 to 64; these read IFLF…VLSI and IVAL…MSLL. Histidine 155 serves as a coordination point for Zn(2+). Glutamate 156 is an active-site residue. Histidine 159 serves as a coordination point for Zn(2+). The next 2 membrane-spanning stretches (helical) occupy residues 170–190 and 204–224; these read LLQG…AWAV and FIAV…VVFA. Glutamate 230 provides a ligand contact to Zn(2+).

Belongs to the peptidase M48B family. The cofactor is Zn(2+).

The protein localises to the cell membrane. The polypeptide is Protease HtpX homolog (Bacillus licheniformis (strain ATCC 14580 / DSM 13 / JCM 2505 / CCUG 7422 / NBRC 12200 / NCIMB 9375 / NCTC 10341 / NRRL NRS-1264 / Gibson 46)).